The following is a 290-amino-acid chain: Short-chain dehydrogenase srdE (290 aa).

NADP(+) is bound by residues Ile-11, Thr-37, Asp-58, and Asn-86. The helical transmembrane segment at 125–145 (LIASSGIIVNIGSIGGVVPFV) threads the bilayer. Tyr-150 is an NADP(+) binding site. The active-site Proton donor is the Tyr-150. Asn-151 is a glycosylation site (N-linked (GlcNAc...) asparagine). NADP(+)-binding residues include Lys-154, Val-183, and Thr-185. Lys-154 (lowers pKa of active site Tyr) is an active-site residue.

This sequence belongs to the short-chain dehydrogenases/reductases (SDR) family.

It is found in the membrane. Its function is as follows. Short-chain dehydrogenase; part of the gene cluster that mediates the biosynthesis of sordarial, a salicylic aldehyde structurally related to the phytotoxin pyriculol. The most interesting aspect of this pathway is formation of an aromatic product from the highly reducing polyketide synthase srdA. SrdA synthesizes a reduced polyketide chain from one molecule of acetyl-CoA and five molecules of malonyl-CoA. The polyketide chain is then reductively released as an aldehyde. The oxidoreductases srdC, srdD and srdE then oxidize one of the hydroxy groups to facilitate the intramolecular aldol condensation, followed by dehydration to yield a salicylic aldehyde. This aldehyde can undergo facile reduction by endogenous reductases to yield the alcohol 1-hydroxy-2-hydroxymethyl-3-pent-1,3-dienylbenzene. The flavin-dependent srdI counteract against the propensity of the aldehydes to be reduced under physiological conditions and is responsible for reoxidizing 1-hydroxy-2-hydroxymethyl-3-pent-1,3-dienylbenzene back to the salicylic aldehyde. This salicylic aldehyde is then selectively epoxidized by the cupin-domain-containing oxidoreductase srdB to yield the epoxide, which can be hydrolyzed stereoselectively by the hydrolase srdG to give the final product sordarial. The polypeptide is Short-chain dehydrogenase srdE (Neurospora crassa (strain ATCC 24698 / 74-OR23-1A / CBS 708.71 / DSM 1257 / FGSC 987)).